A 209-amino-acid polypeptide reads, in one-letter code: Small ribosomal subunit protein uS4 (209 aa).

The 64-residue stretch at 98–161 folds into the S4 RNA-binding domain; sequence TRLDNVVYRM…AKQLRVQEAL (64 aa).

Belongs to the universal ribosomal protein uS4 family. As to quaternary structure, part of the 30S ribosomal subunit. Contacts protein S5. The interaction surface between S4 and S5 is involved in control of translational fidelity.

In terms of biological role, one of the primary rRNA binding proteins, it binds directly to 16S rRNA where it nucleates assembly of the body of the 30S subunit. Functionally, with S5 and S12 plays an important role in translational accuracy. The sequence is that of Small ribosomal subunit protein uS4 from Stenotrophomonas maltophilia (strain R551-3).